Consider the following 278-residue polypeptide: Toxin coregulated pilus biosynthesis protein D (278 aa).

Residues leucine 30–tyrosine 50 form a helical membrane-spanning segment.

It is found in the cell membrane. Its function is as follows. Involved in TCP pilus biogenesis. This chain is Toxin coregulated pilus biosynthesis protein D (tcpD), found in Vibrio cholerae serotype O1 (strain ATCC 39315 / El Tor Inaba N16961).